The primary structure comprises 49 residues: Large ribosomal subunit protein bL33A (49 aa).

The protein belongs to the bacterial ribosomal protein bL33 family.

This chain is Large ribosomal subunit protein bL33A, found in Staphylococcus haemolyticus (strain JCSC1435).